The sequence spans 146 residues: Monothiol glutaredoxin-5, mitochondrial (146 aa).

Residues 26–131 enclose the Glutaredoxin domain; sequence RQALEQAVKE…KILKEINALA (106 aa). Lys-43 provides a ligand contact to glutathione. Position 51 (Cys-51) interacts with [2Fe-2S] cluster. Glutathione is bound by residues 83–87, Ile-95, and 108–109; these read REGIK and SD.

Belongs to the glutaredoxin family. Monothiol subfamily. Homodimer. Interacts with ISA1 and ISA2.

The protein localises to the mitochondrion. Functionally, monothiol glutaredoxin involved in mitochondrial iron-sulfur (Fe/S) cluster transfer. Receives 2Fe/2S clusters from scaffold protein isu1 and mediates their transfer to apoproteins, to the 4Fe/FS cluster biosynthesis machinery, or export from mitochondrion. This chain is Monothiol glutaredoxin-5, mitochondrial, found in Schizosaccharomyces pombe (strain 972 / ATCC 24843) (Fission yeast).